Here is a 1649-residue protein sequence, read N- to C-terminus: eIF-2-alpha kinase GCN2 (1649 aa).

Disordered stretches follow at residues 1-25 (MAGG…RQDH), 138-158 (NKPP…QEEQ), and 227-256 (HGGS…YSVC). The RWD domain maps to 25-137 (HELQALEAIY…YHVQSFLSEH (113 aa)). The stretch at 146–205 (HEEMLERRAQEEQQRLLEAKRKEEQEQREILHEIQRRKEEIKEEKKRKEMAKQERLEIAS) forms a coiled coil. Ser-230 is modified (phosphoserine). The segment covering 237–249 (GKHRANSSGRSRR) has biased composition (basic residues). 2 Protein kinase domains span residues 296 to 539 (VYNA…HSFI) and 590 to 1001 (FEEL…SELL). ATP is bound by residues 596–604 (LGKGAFGAV) and Lys-619. Disordered stretches follow at residues 660–750 (ERPA…QSFL) and 766–788 (ENSK…ESEP). Phosphothreonine is present on Thr-667. Residues 705-717 (LSSSVEWSTSGER) show a composition bias toward polar residues. Acidic residues predominate over residues 731 to 740 (SDDEDDDEDE). The span at 778–787 (NEKNGCHESE) shows a compositional bias: basic and acidic residues. Catalysis depends on Asp-848, which acts as the Proton acceptor. The residue at position 871 (Thr-871) is a Phosphothreonine. A phosphothreonine; by autocatalysis mark is found at Thr-899 and Thr-904. A histidyl-tRNA synthetase-like region spans residues 1022–1493 (VDGKAYRTMM…DHVLQKLRTK (472 aa)). Residue Lys-1259 is modified to N6-acetyllysine.

This sequence belongs to the protein kinase superfamily. Ser/Thr protein kinase family. GCN2 subfamily. Homodimer; homodimerization is important for kinase activation by uncharged tRNAs. Interacts with GCN1; this interaction stimulates EIF2AK4/GCN2 kinase activity and is impaired by IMPACT upon a variety of stress conditions, such as amino acid depletion, UV-C irradiation, proteasome inhibitor treatment and glucose deprivation. Interacts with DNAJC3; this interaction inhibits EIF2AK4/GCN2 kinase activity during endoplasmic reticulum (ER), hypothermic and amino acid-starving stress conditions. Interacts with MAP3K20; activates EIF2AK4/GCN2 kinase activity in response to moderate ribotoxic stress. As to quaternary structure, (Microbial infection) Interacts with hepatitis E virus (HEV) ORF1 protease; this interaction inhibits dimerization of EIF2AK4 and prevents EIF2AK4-mediated phosphorylation of EIF2A. Post-translationally, autophosphorylated; autophosphorylation on Thr-899 is increased upon amino acid starvation and in UV irradiation cells and inhibited in presence of IMPACT. In terms of tissue distribution, widely expressed. Expressed in lung, smooth muscle cells and macrophages.

Its subcellular location is the cytoplasm. It catalyses the reaction L-seryl-[protein] + ATP = O-phospho-L-seryl-[protein] + ADP + H(+). It carries out the reaction L-threonyl-[protein] + ATP = O-phospho-L-threonyl-[protein] + ADP + H(+). Metabolic-stress sensing protein kinase that phosphorylates the alpha subunit of eukaryotic translation initiation factor 2 (EIF2S1/eIF-2-alpha) in response to low amino acid availability. Plays a role as an activator of the integrated stress response (ISR) required for adaptation to amino acid starvation. EIF2S1/eIF-2-alpha phosphorylation in response to stress converts EIF2S1/eIF-2-alpha into a global protein synthesis inhibitor, leading to a global attenuation of cap-dependent translation, and thus to a reduced overall utilization of amino acids, while concomitantly initiating the preferential translation of ISR-specific mRNAs, such as the transcriptional activator ATF4, and hence allowing ATF4-mediated reprogramming of amino acid biosynthetic gene expression to alleviate nutrient depletion. Binds uncharged tRNAs. Required for the translational induction of protein kinase PRKCH following amino acid starvation. Involved in cell cycle arrest by promoting cyclin D1 mRNA translation repression after the unfolded protein response pathway (UPR) activation or cell cycle inhibitor CDKN1A/p21 mRNA translation activation in response to amino acid deprivation. Plays a role in the consolidation of synaptic plasticity, learning as well as formation of long-term memory. Plays a role in neurite outgrowth inhibition. Plays a proapoptotic role in response to glucose deprivation. Promotes global cellular protein synthesis repression in response to UV irradiation independently of the stress-activated protein kinase/c-Jun N-terminal kinase (SAPK/JNK) and p38 MAPK signaling pathways. Plays a role in the antiviral response against alphavirus infection; impairs early viral mRNA translation of the incoming genomic virus RNA, thus preventing alphavirus replication. Its function is as follows. (Microbial infection) Plays a role in modulating the adaptive immune response to yellow fever virus infection; promotes dendritic cells to initiate autophagy and antigene presentation to both CD4(+) and CD8(+) T-cells under amino acid starvation. In Homo sapiens (Human), this protein is eIF-2-alpha kinase GCN2.